The sequence spans 729 residues: ATP-dependent RNA helicase rok1 (729 aa).

Disordered stretches follow at residues 15-34 (AGNSLSSTLPSKGKAENPQL) and 45-171 (ESNA…KKAR). A compositionally biased stretch (basic and acidic residues) spans 87–101 (SKKDEDGPSEQKDAS). A Q motif motif is present at residues 183-211 (QLRTKYNISRRLAENIAEQGFTVPTEVQL). The 214-residue stretch at 228-441 (GTEKSTEPDL…KSTIKERKDT (214 aa)) folds into the Helicase ATP-binding domain. 241–248 (APTGSGKT) is an ATP binding site. The tract at residues 313 to 350 (ERDDEDDSKDVLDEDDSESLGSEDDEKATAKNSKGKAP) is disordered. The segment covering 314-338 (RDDEDDSKDVLDEDDSESLGSEDDE) has biased composition (acidic residues). A DEAD box motif is present at residues 388-391 (DEAD). In terms of domain architecture, Helicase C-terminal spans 481–649 (GLRQLLHPAA…SVQKWLLDAL (169 aa)). Residues 657–729 (KEELKKHGVK…DNQGWQGLED (73 aa)) are disordered. Positions 686–695 (GYERRQENKK) are enriched in basic and acidic residues. Residues 696–708 (KALISASRNRKSQ) show a composition bias toward basic residues. A compositionally biased stretch (acidic residues) spans 716–729 (GSDDDNQGWQGLED).

This sequence belongs to the DEAD box helicase family. DDX52/ROK1 subfamily. In terms of assembly, interacts with the U3 snoRNA and is associated with the 90S and 40S pre-ribosomes.

Its subcellular location is the nucleus. It is found in the nucleolus. The catalysed reaction is ATP + H2O = ADP + phosphate + H(+). Its function is as follows. ATP-dependent RNA helicase involved in 40S ribosomal subunit biogenesis. Required for the processing and cleavage of 35S pre-rRNA at sites A0, A1, and A2, leading to mature 18S rRNA. The chain is ATP-dependent RNA helicase rok1 (rok1) from Aspergillus niger (strain ATCC MYA-4892 / CBS 513.88 / FGSC A1513).